Consider the following 442-residue polypeptide: UDP-N-acetylglucosamine 1-carboxyvinyltransferase (442 aa).

22 to 23 serves as a coordination point for phosphoenolpyruvate; it reads KN. Residue Arg94 participates in UDP-N-acetyl-alpha-D-glucosamine binding. The Proton donor role is filled by Asp119. Residues Asp309 and Val331 each contribute to the UDP-N-acetyl-alpha-D-glucosamine site.

Belongs to the EPSP synthase family. MurA subfamily.

The protein resides in the cytoplasm. The enzyme catalyses phosphoenolpyruvate + UDP-N-acetyl-alpha-D-glucosamine = UDP-N-acetyl-3-O-(1-carboxyvinyl)-alpha-D-glucosamine + phosphate. It functions in the pathway cell wall biogenesis; peptidoglycan biosynthesis. In terms of biological role, cell wall formation. Adds enolpyruvyl to UDP-N-acetylglucosamine. This Chlamydia muridarum (strain MoPn / Nigg) protein is UDP-N-acetylglucosamine 1-carboxyvinyltransferase.